The primary structure comprises 443 residues: tRNA (guanine-N(7)-)-methyltransferase non-catalytic subunit TRM82 (443 aa).

Positions 67 to 93 (ASKKLKTNDGEPVAQPKKQAKVPKPGP) are disordered. 3 WD repeats span residues 97 to 137 (PVYQ…KDNI), 193 to 235 (GHVS…IVDK), and 239 to 279 (GHEE…LLFK).

Belongs to the WD repeat TRM82 family. As to quaternary structure, forms a heterodimer with the catalytic subunit TRM8.

The protein localises to the nucleus. It functions in the pathway tRNA modification; N(7)-methylguanine-tRNA biosynthesis. In terms of biological role, required for the formation of N(7)-methylguanine at position 46 (m7G46) in tRNA. In the complex, it is required to stabilize and induce conformational changes of the catalytic subunit. This chain is tRNA (guanine-N(7)-)-methyltransferase non-catalytic subunit TRM82, found in Kluyveromyces lactis (strain ATCC 8585 / CBS 2359 / DSM 70799 / NBRC 1267 / NRRL Y-1140 / WM37) (Yeast).